Here is a 468-residue protein sequence, read N- to C-terminus: Glutamate--tRNA ligase 2 (468 aa).

A 'HIGH' region motif is present at residues 9–19 (PSPTGFLHIGG). Residues 238–242 (KLSKR) carry the 'KMSKS' region motif. K241 is an ATP binding site.

Belongs to the class-I aminoacyl-tRNA synthetase family. Glutamate--tRNA ligase type 1 subfamily. As to quaternary structure, monomer.

The protein localises to the cytoplasm. It carries out the reaction tRNA(Glu) + L-glutamate + ATP = L-glutamyl-tRNA(Glu) + AMP + diphosphate. Its function is as follows. Catalyzes the attachment of glutamate to tRNA(Glu) in a two-step reaction: glutamate is first activated by ATP to form Glu-AMP and then transferred to the acceptor end of tRNA(Glu). The polypeptide is Glutamate--tRNA ligase 2 (Rhodospirillum rubrum (strain ATCC 11170 / ATH 1.1.1 / DSM 467 / LMG 4362 / NCIMB 8255 / S1)).